The chain runs to 238 residues: DNA repair protein RAD59 (238 aa).

It belongs to the RAD52 family. Interacts with RAD51 and RAD52.

Its subcellular location is the nucleus. Its function is as follows. Involved in the repair of double-strand breaks in DNA during vegetative growth via recombination and single-strand annealing. Anneals complementary single-stranded DNA. In Saccharomyces cerevisiae (strain ATCC 204508 / S288c) (Baker's yeast), this protein is DNA repair protein RAD59 (RAD59).